Consider the following 443-residue polypeptide: 3-isopropylmalate dehydratase large subunit (443 aa).

Residues C347, C407, and C410 each coordinate [4Fe-4S] cluster.

The protein belongs to the aconitase/IPM isomerase family. LeuC type 1 subfamily. In terms of assembly, heterodimer of LeuC and LeuD. [4Fe-4S] cluster serves as cofactor.

The enzyme catalyses (2R,3S)-3-isopropylmalate = (2S)-2-isopropylmalate. It functions in the pathway amino-acid biosynthesis; L-leucine biosynthesis; L-leucine from 3-methyl-2-oxobutanoate: step 2/4. Its function is as follows. Catalyzes the isomerization between 2-isopropylmalate and 3-isopropylmalate, via the formation of 2-isopropylmaleate. In Buchnera aphidicola subsp. Uroleucon sonchi, this protein is 3-isopropylmalate dehydratase large subunit.